Here is a 133-residue protein sequence, read N- to C-terminus: Small ribosomal subunit protein bS6 (133 aa).

Belongs to the bacterial ribosomal protein bS6 family.

Binds together with bS18 to 16S ribosomal RNA. The chain is Small ribosomal subunit protein bS6 from Chlorobium luteolum (strain DSM 273 / BCRC 81028 / 2530) (Pelodictyon luteolum).